Consider the following 48-residue polypeptide: Large ribosomal subunit protein bL32 (48 aa).

Positions 1-20 (MAVPKRRVSKTRAAKRRTHY) are enriched in basic residues. The interval 1–48 (MAVPKRRVSKTRAAKRRTHYKVSLPIPVKDKDGSWKLPHRINTKTGEY) is disordered.

This sequence belongs to the bacterial ribosomal protein bL32 family.

This chain is Large ribosomal subunit protein bL32, found in Campylobacter hominis (strain ATCC BAA-381 / DSM 21671 / CCUG 45161 / LMG 19568 / NCTC 13146 / CH001A).